The sequence spans 491 residues: Cell division control protein 1 (491 aa).

The interval 1 to 33 (MVYRNRSKSVLSTHSKKSDDKAHYKSRSKKKSK) is disordered. Residues 1-39 (MVYRNRSKSVLSTHSKKSDDKAHYKSRSKKKSKSRSKKR) are Cytoplasmic-facing. Positions 24–33 (YKSRSKKKSK) are enriched in basic residues. The helical transmembrane segment at 40 to 60 (LRIYWRYISIVWILWLGLISY) threads the bilayer. Residues 61 to 391 (YESVVVKRAM…LCYMPDPYKA (331 aa)) are Extracellular-facing. Residues Asp95, Asp144, Asn183, and His323 each contribute to the a divalent metal cation site. A helical transmembrane segment spans residues 392 to 412 (IRMYLWGLLFSAAFIAYMHFF). Topologically, residues 413–465 (PKSFNNRVATIMNRVFTRPDGNTSDLPLPTSISKSKSKKSLTHSKYAVNDTRS) are cytoplasmic. A helical transmembrane segment spans residues 466–486 (IKQFLVNAIVLFVSVMPIFIY). Residues 487 to 491 (FYTVV) lie on the Extracellular side of the membrane.

The protein belongs to the metallophosphoesterase superfamily. MPPE1 family. A divalent metal cation serves as cofactor.

The protein localises to the membrane. In terms of biological role, probable metallophosphoesterase which may participate in recombinational repair of double -strand breaks. This chain is Cell division control protein 1 (CDC1), found in Saccharomyces cerevisiae (strain ATCC 204508 / S288c) (Baker's yeast).